The following is a 920-amino-acid chain: MTFTFSTSSRKNGRPPLKSVSTEDNIHLLRKRRQQQLSSNSTDNSLHPNSGQTPRASDSQDDDIRSASTTNLDRLRQEREENSLEMDCTQSRLSHRANMLVDVLPSFEMYNALHRHIPQGNVDPDRHDFPPSYQEVRTQRMTILPSNDNSVERSQLTAVPGSENACNNATAHSLTNLHPLQTQHLTINSTRSGGQSLHSSSDTNISQIPFEDDLNDSDNIFIDKLYTLPKLSTPIEIDIRITKTASIPHERPEEQSILKEYTSGDIIHGYCLIENRSSQPLKFEMFYVTLEAYISVIDRQKGKRTLKRFLRMVDLSASWSYTNITPSTGINIVPGERDFDDAIIGLSNSRELKPNTKYKKFFMFKLPTQLLDVTCKQEQFSHCLLPPSFGIDKYKNNCKYSGIKVNSVLGCGHLGTKGSPILTLDMADDNLSINYTIDAKIVGKDKRTSKLNIMKEKEYNLRVMPFPFAGVTNQQNEKTCLRQLKNLESLIEDRFEALNKIFKKLELNEAISNVDIHDTDISGTLDGNEDLDSDEILRRKLDQLHINNRIDDTASQSPSYDSKNMAPKENLVETELRYKFKNKNKSNSSLFSHFLSSSETGSSSTGPHVYNSGLIVLSVKKPQSTLPYWSPSLLRKTNKFEAKSEQEKENWQRLMGMLPEGVKTPLTKLDVHLTCIQSNNSAGHKPPEISSVTTEFVVITAKSDNSIPIKFCTELLMNENRLNKLKTKFLTYQKKVHEYRKKFEENHAKLNELYNRNRDHFTPKELLFTNFISDQINNDIDSLAGLKVNIIDLHDIFKKQIHTFEEENEDIISKKGSSNPPSASSSNNNFLQATFSNGASTATKFTQQIVHEWEKVKPLQYKRDVTVNLKLNPNIKETLVPNLETCLCCRFYCVRVNIKFDNHLGSMKVDIPVDVKKLQI.

Polar residues predominate over residues 1 to 10 (MTFTFSTSSR). Residues 1 to 89 (MTFTFSTSSR…EENSLEMDCT (89 aa)) form a disordered region. The residue at position 22 (Thr22) is a Phosphothreonine. The span at 35-57 (QQLSSNSTDNSLHPNSGQTPRAS) shows a compositional bias: polar residues. Residues 73-82 (DRLRQEREEN) are compositionally biased toward basic and acidic residues. The PY-motif motif lies at 129–133 (FPPSY). Position 557 is a phosphoserine (Ser557).

The protein belongs to the BUL1 family. In terms of assembly, component of the RSP5-BUL1/2 ubiquitin ligase complex composed of at least RSP5 and BUL1 or BUL2.

It is found in the cytoplasm. It functions in the pathway protein modification; protein ubiquitination. Its function is as follows. Component of a RSP5 ubiquitin ligase complex which specifies polyubiquitination and intracellular trafficking of the general amino acid permease GAP1 as well as other permeases such as PMA1. The RSP5-BUL1/2 complex is also necessary for the heat-shock element (HSE)-mediated gene expression, nitrogen starvation GLN3-dependent transcription and pressure-induced differential regulation of the 2 tryptophan permeases TAT1 and TAT2. The polypeptide is Ubiquitin ligase-binding protein BUL2 (BUL2) (Saccharomyces cerevisiae (strain ATCC 204508 / S288c) (Baker's yeast)).